We begin with the raw amino-acid sequence, 350 residues long: Biotin synthase (350 aa).

The Radical SAM core domain occupies 41-265; it reads NEVQISRLLS…VMPLSRVRLS (225 aa). 3 residues coordinate [4Fe-4S] cluster: Cys-56, Cys-60, and Cys-63. [2Fe-2S] cluster-binding residues include Cys-100, Cys-131, Cys-191, and Arg-263.

Belongs to the radical SAM superfamily. Biotin synthase family. Homodimer. [4Fe-4S] cluster is required as a cofactor. Requires [2Fe-2S] cluster as cofactor.

The catalysed reaction is (4R,5S)-dethiobiotin + (sulfur carrier)-SH + 2 reduced [2Fe-2S]-[ferredoxin] + 2 S-adenosyl-L-methionine = (sulfur carrier)-H + biotin + 2 5'-deoxyadenosine + 2 L-methionine + 2 oxidized [2Fe-2S]-[ferredoxin]. Its pathway is cofactor biosynthesis; biotin biosynthesis; biotin from 7,8-diaminononanoate: step 2/2. Catalyzes the conversion of dethiobiotin (DTB) to biotin by the insertion of a sulfur atom into dethiobiotin via a radical-based mechanism. This is Biotin synthase from Shewanella loihica (strain ATCC BAA-1088 / PV-4).